A 213-amino-acid chain; its full sequence is U1 small nuclear ribonucleoprotein C (213 aa).

A Matrin-type zinc finger spans residues 4–36 (YYCDYCDTYLTHDSPSVRKQHNAGYKHKANVRS). The segment covering 143-166 (APSMPMPPLNSLPRPPTMNVPPAV) has biased composition (pro residues). The interval 143–213 (APSMPMPPLN…INAQGPEANH (71 aa)) is disordered. Residues 167–180 (PGSTSTPTSGGAPS) are compositionally biased toward low complexity.

Belongs to the U1 small nuclear ribonucleoprotein C family. As to quaternary structure, U1 snRNP is composed of the 7 core Sm proteins B/B', D1, D2, D3, E, F and G that assemble in a heptameric protein ring on the Sm site of the small nuclear RNA to form the core snRNP, and at least 3 U1 snRNP-specific proteins U1-70K, U1-A and U1-C. U1-C interacts with U1 snRNA and the 5' splice-site region of the pre-mRNA.

The protein localises to the nucleus. Functionally, component of the spliceosomal U1 snRNP, which is essential for recognition of the pre-mRNA 5' splice-site and the subsequent assembly of the spliceosome. U1-C is directly involved in initial 5' splice-site recognition for both constitutive and regulated alternative splicing. The interaction with the 5' splice-site seems to precede base-pairing between the pre-mRNA and the U1 snRNA. Stimulates commitment or early (E) complex formation by stabilizing the base pairing of the 5' end of the U1 snRNA and the 5' splice-site region. The chain is U1 small nuclear ribonucleoprotein C from Vitis vinifera (Grape).